Consider the following 462-residue polypeptide: Cysteine--tRNA ligase (462 aa).

C30 is a binding site for Zn(2+). Residues 32 to 42 carry the 'HIGH' region motif; it reads MTVYDYCHVGH. 3 residues coordinate Zn(2+): C214, H239, and E243. The 'KMSKS' region motif lies at 271–275; that stretch reads KMSKS. K274 serves as a coordination point for ATP.

This sequence belongs to the class-I aminoacyl-tRNA synthetase family. Monomer. It depends on Zn(2+) as a cofactor.

Its subcellular location is the cytoplasm. The enzyme catalyses tRNA(Cys) + L-cysteine + ATP = L-cysteinyl-tRNA(Cys) + AMP + diphosphate. This chain is Cysteine--tRNA ligase, found in Cupriavidus pinatubonensis (strain JMP 134 / LMG 1197) (Cupriavidus necator (strain JMP 134)).